Consider the following 1393-residue polypeptide: DNA-directed RNA polymerase subunit beta (1393 aa).

This sequence belongs to the RNA polymerase beta chain family. As to quaternary structure, the RNAP catalytic core consists of 2 alpha, 1 beta, 1 beta' and 1 omega subunit. When a sigma factor is associated with the core the holoenzyme is formed, which can initiate transcription.

It carries out the reaction RNA(n) + a ribonucleoside 5'-triphosphate = RNA(n+1) + diphosphate. Functionally, DNA-dependent RNA polymerase catalyzes the transcription of DNA into RNA using the four ribonucleoside triphosphates as substrates. This is DNA-directed RNA polymerase subunit beta from Rhodospirillum rubrum (strain ATCC 11170 / ATH 1.1.1 / DSM 467 / LMG 4362 / NCIMB 8255 / S1).